The sequence spans 597 residues: Phosphoinositide phospholipase C 4 (597 aa).

The 35-residue stretch at 26 to 60 folds into the EF-hand domain; that stretch reads GPVEDVRDLFEKYTEGDAHMSPEQLQKLMTEEGGE. In terms of domain architecture, PI-PLC X-box spans 114–257; it reads QNMDAPLSHY…LKEKILISTK (144 aa). Residues H129 and H174 contribute to the active site. Residues 259–290 show a composition bias toward basic and acidic residues; it reads PKEYLEANDTKEKDNGEKGKDSDEDVWGKEPE. The interval 259–324 is disordered; sequence PKEYLEANDT…ERGSCESDTS (66 aa). Positions 293 to 309 are enriched in polar residues; the sequence is ISTQSDLDKVTSSVNDL. Positions 333–449 constitute a PI-PLC Y-box domain; the sequence is KRLIAIHAGK…GYVKKPDFLM (117 aa). The region spanning 449–579 is the C2 domain; sequence MDASPNGQDF…QGIRAVPLFN (131 aa).

It depends on Ca(2+) as a cofactor. As to expression, low expression in leaves, roots, flowers and siliques. Expressed in pollen and in cells of the stigma surface.

It is found in the cytoplasm. It localises to the cytosol. The protein localises to the cell membrane. It carries out the reaction a 1,2-diacyl-sn-glycero-3-phospho-(1D-myo-inositol-4,5-bisphosphate) + H2O = 1D-myo-inositol 1,4,5-trisphosphate + a 1,2-diacyl-sn-glycerol + H(+). The production of the second messenger molecules diacylglycerol (DAG) and inositol 1,4,5-trisphosphate (IP3) is mediated by activated phosphatidylinositol-specific phospholipase C enzymes. The chain is Phosphoinositide phospholipase C 4 (PLC4) from Arabidopsis thaliana (Mouse-ear cress).